A 426-amino-acid chain; its full sequence is MSKSENLYSAARELIPGGVNSPVRAFTGVGGTPLFIEKADGAYLYDVDGKAYIDYVGSWGPMVLGHNHPAIRNAVIEAAERGLSFGAPTEMEVKMAQLVTELVPTMDMVRMVNSGTEATMSAIRLARGFTGRDKIIKFEGCYHGHADCLLVKAGSGALTLGQPNSPGVPADFAKHTLTCTYNDLASVRAAFEQYPQEIACIIVEPVAGNMNCVPPLPEFLPGLRALCDEFGALLIIDEVMTGFRVALAGAQDYYDVVPDLTCLGKIIGGGMPVGAFGGRRDVMDALAPIGPVYQAGTLSGNPIAMAAGFACLNEVAQPGVHETLDELTTRLAEGLLEAAEEAGIPLVVNHVGGMFGIFFTDAESVTCYQDVMACDVERFKRFFHMMLDEGVYLAPSAFEAGFMSVAHSMEDINNTIDAARRVFAKL.

N6-(pyridoxal phosphate)lysine is present on Lys265.

Belongs to the class-III pyridoxal-phosphate-dependent aminotransferase family. HemL subfamily. As to quaternary structure, homodimer. It depends on pyridoxal 5'-phosphate as a cofactor.

It is found in the cytoplasm. It catalyses the reaction (S)-4-amino-5-oxopentanoate = 5-aminolevulinate. It participates in porphyrin-containing compound metabolism; protoporphyrin-IX biosynthesis; 5-aminolevulinate from L-glutamyl-tRNA(Glu): step 2/2. In Escherichia fergusonii (strain ATCC 35469 / DSM 13698 / CCUG 18766 / IAM 14443 / JCM 21226 / LMG 7866 / NBRC 102419 / NCTC 12128 / CDC 0568-73), this protein is Glutamate-1-semialdehyde 2,1-aminomutase.